The primary structure comprises 355 residues: Molybdenum import ATP-binding protein ModC (355 aa).

In terms of domain architecture, ABC transporter spans 1 to 233; that stretch reads MTLIVEAKQR…PSAAADRKEA (233 aa). 31–38 lines the ATP pocket; the sequence is GRSGSGKT. One can recognise a Mop domain in the interval 291–355; sequence GLSALNILEG…AIIKTVALEG (65 aa).

This sequence belongs to the ABC transporter superfamily. Molybdate importer (TC 3.A.1.8) family. The complex is composed of two ATP-binding proteins (ModC), two transmembrane proteins (ModB) and a solute-binding protein (ModA).

The protein resides in the cell inner membrane. It catalyses the reaction molybdate(out) + ATP + H2O = molybdate(in) + ADP + phosphate + H(+). Part of the ABC transporter complex ModABC involved in molybdenum import. Responsible for energy coupling to the transport system. The sequence is that of Molybdenum import ATP-binding protein ModC from Rhizobium etli (strain ATCC 51251 / DSM 11541 / JCM 21823 / NBRC 15573 / CFN 42).